The chain runs to 578 residues: Proteasome-associated ATPase (578 aa).

Residues 35-84 (RHLTALEEQLGAARTRLAQVSAQNDRLATTLREARDQIVALKAEVDRLGQ) adopt a coiled-coil conformation. 266-271 (GCGKTL) serves as a coordination point for ATP. The interval 577–578 (YL) is docks into pockets in the proteasome alpha-ring.

It belongs to the AAA ATPase family. Homohexamer. Assembles into a hexameric ring structure that caps the 20S proteasome core. Strongly interacts with the prokaryotic ubiquitin-like protein Pup through a hydrophobic interface; the interacting region of ARC lies in its N-terminal coiled-coil domain. There is one Pup binding site per ARC hexamer ring. Upon ATP-binding, the C-terminus of ARC interacts with the alpha-rings of the proteasome core, possibly by binding to the intersubunit pockets.

It participates in protein degradation; proteasomal Pup-dependent pathway. Its function is as follows. ATPase which is responsible for recognizing, binding, unfolding and translocation of pupylated proteins into the bacterial 20S proteasome core particle. May be essential for opening the gate of the 20S proteasome via an interaction with its C-terminus, thereby allowing substrate entry and access to the site of proteolysis. Thus, the C-termini of the proteasomal ATPase may function like a 'key in a lock' to induce gate opening and therefore regulate proteolysis. The sequence is that of Proteasome-associated ATPase from Kineococcus radiotolerans (strain ATCC BAA-149 / DSM 14245 / SRS30216).